The sequence spans 289 residues: 4-diphosphocytidyl-2-C-methyl-D-erythritol kinase (289 aa).

Residue lysine 15 is part of the active site. 100 to 110 (PVSAGLAGGSA) lines the ATP pocket. Aspartate 140 is an active-site residue.

This sequence belongs to the GHMP kinase family. IspE subfamily.

The enzyme catalyses 4-CDP-2-C-methyl-D-erythritol + ATP = 4-CDP-2-C-methyl-D-erythritol 2-phosphate + ADP + H(+). It functions in the pathway isoprenoid biosynthesis; isopentenyl diphosphate biosynthesis via DXP pathway; isopentenyl diphosphate from 1-deoxy-D-xylulose 5-phosphate: step 3/6. In terms of biological role, catalyzes the phosphorylation of the position 2 hydroxy group of 4-diphosphocytidyl-2C-methyl-D-erythritol. In Anaplasma marginale (strain Florida), this protein is 4-diphosphocytidyl-2-C-methyl-D-erythritol kinase.